Here is a 370-residue protein sequence, read N- to C-terminus: DNA replication and repair protein RecF (370 aa).

Residue 30-37 participates in ATP binding; it reads GENAQGKT.

This sequence belongs to the RecF family.

It is found in the cytoplasm. The RecF protein is involved in DNA metabolism; it is required for DNA replication and normal SOS inducibility. RecF binds preferentially to single-stranded, linear DNA. It also seems to bind ATP. The protein is DNA replication and repair protein RecF of Bacillus pumilus (strain SAFR-032).